The primary structure comprises 366 residues: E3 ubiquitin-protein ligase SINA-like 1 (366 aa).

A disordered region spans residues 1-37; that stretch reads MVKGTNAEQALAREEASSSRPKRQRVPSIVEEEGENG. Residues 56–92 form an RING-type; degenerate zinc finger; that stretch reads CPICCNALTIPIFQCDKGHIACSSCCTNVSNKCPYCS. An SBD region spans residues 106 to 354; it reads VVEAFIVRCP…KGTYICIRSL (249 aa). Residues 109–232 form an SIAH-type; degenerate zinc finger; it reads AFIVRCPIVA…LYSHYAANHK (124 aa). 8 residues coordinate Zn(2+): Cys114, Cys186, His198, Cys202, Cys209, Cys214, His226, and His231.

It belongs to the SINA (Seven in absentia) family.

It catalyses the reaction S-ubiquitinyl-[E2 ubiquitin-conjugating enzyme]-L-cysteine + [acceptor protein]-L-lysine = [E2 ubiquitin-conjugating enzyme]-L-cysteine + N(6)-ubiquitinyl-[acceptor protein]-L-lysine.. Its pathway is protein modification; protein ubiquitination. In terms of biological role, E3 ubiquitin-protein ligase that mediates ubiquitination and subsequent proteasomal degradation of target proteins. E3 ubiquitin ligases accept ubiquitin from an E2 ubiquitin-conjugating enzyme in the form of a thioester and then directly transfers the ubiquitin to targeted substrates. It probably triggers the ubiquitin-mediated degradation of different substrates. The polypeptide is E3 ubiquitin-protein ligase SINA-like 1 (Arabidopsis thaliana (Mouse-ear cress)).